The sequence spans 114 residues: U17-barytoxin-Tl1d (114 aa).

The first 20 residues, 1 to 20 (MKTIIVFLSLLVLATKFGDA), serve as a signal peptide directing secretion. A propeptide spanning residues 21–74 (NEGVNQEQMKEVIQNEFREDFLNEMAPMSLLQQLEAIESTLLEKEADRNSRQKR) is cleaved from the precursor. 3 disulfide bridges follow: Cys75-Cys88, Cys82-Cys93, and Cys87-Cys108.

Belongs to the neurotoxin 14 (magi-1) family. 03 (ICK-30-40) subfamily. In terms of tissue distribution, expressed by the venom gland.

It localises to the secreted. In terms of biological role, ion channel inhibitor. The protein is U17-barytoxin-Tl1d of Trittame loki (Brush-footed trapdoor spider).